We begin with the raw amino-acid sequence, 895 residues long: Probable methyltransferase PMT27 (895 aa).

Topologically, residues 1-16 (MAFGRGRGNKRTSTSS) are cytoplasmic. A helical; Signal-anchor for type II membrane protein membrane pass occupies residues 17–37 (YASTITMVIFVALCVFGVWML). The Lumenal portion of the chain corresponds to 38-895 (SSNSVIPPQI…KGFWRPETSQ (858 aa)). Over residues 43–52 (IPPQITQGST) the composition is skewed to polar residues. The disordered stretch occupies residues 43 to 362 (IPPQITQGST…QRQTSESNTV (320 aa)). Positions 90 to 114 (NPGKLPDDAVKSEDEQRKSAKEKSE) are enriched in basic and acidic residues. Positions 115–127 (TTSSKTQTQETQQ) are enriched in low complexity. Over residues 129-143 (NDDKISEEKEKDNGK) the composition is skewed to basic and acidic residues. Asparagine 145 carries N-linked (GlcNAc...) asparagine glycosylation. Basic and acidic residues predominate over residues 154 to 174 (GQMKKVVKEFEKEQKQQRDED). Low complexity predominate over residues 176–191 (GTQPKGTQGQEQGQGK). Polar residues-rich tracts occupy residues 199–232 (GNKQ…GETS) and 243–256 (PEEQ…TGQQ). The segment covering 257 to 320 (NEEKTTASEE…RKDEKKHEQG (64 aa)) has biased composition (basic and acidic residues). Residues 337 to 346 (SQKSWKSQAT) show a composition bias toward polar residues. N-linked (GlcNAc...) asparagine glycosylation is found at asparagine 375 and asparagine 709.

It belongs to the methyltransferase superfamily.

Its subcellular location is the endoplasmic reticulum membrane. This is Probable methyltransferase PMT27 from Arabidopsis thaliana (Mouse-ear cress).